A 609-amino-acid polypeptide reads, in one-letter code: Probable translation initiation factor IF-2 (609 aa).

Positions 12-230 (LRQPIVAVLG…VLAGLAQRYM (219 aa)) constitute a tr-type G domain. A G1 region spans residues 21–28 (GHVDHGKT). 21 to 28 (GHVDHGKT) provides a ligand contact to GTP. Positions 46-50 (QITQH) are G2. Residues 86-89 (DTPG) form a G3 region. Residues 86-90 (DTPGH) and 140-143 (NKID) each bind GTP. A G4 region spans residues 140–143 (NKID). The tract at residues 208-210 (SAK) is G5.

It belongs to the TRAFAC class translation factor GTPase superfamily. Classic translation factor GTPase family. IF-2 subfamily.

Function in general translation initiation by promoting the binding of the formylmethionine-tRNA to ribosomes. Seems to function along with eIF-2. The polypeptide is Probable translation initiation factor IF-2 (Ignicoccus hospitalis (strain KIN4/I / DSM 18386 / JCM 14125)).